The primary structure comprises 274 residues: Ribosomal RNA small subunit methyltransferase A (274 aa).

Residues Asn-28, Leu-30, Gly-55, Glu-77, Asp-103, and Asn-122 each coordinate S-adenosyl-L-methionine.

Belongs to the class I-like SAM-binding methyltransferase superfamily. rRNA adenine N(6)-methyltransferase family. RsmA subfamily.

It localises to the cytoplasm. It carries out the reaction adenosine(1518)/adenosine(1519) in 16S rRNA + 4 S-adenosyl-L-methionine = N(6)-dimethyladenosine(1518)/N(6)-dimethyladenosine(1519) in 16S rRNA + 4 S-adenosyl-L-homocysteine + 4 H(+). Its function is as follows. Specifically dimethylates two adjacent adenosines (A1518 and A1519) in the loop of a conserved hairpin near the 3'-end of 16S rRNA in the 30S particle. May play a critical role in biogenesis of 30S subunits. This is Ribosomal RNA small subunit methyltransferase A from Sinorhizobium medicae (strain WSM419) (Ensifer medicae).